Consider the following 81-residue polypeptide: ATP synthase subunit c (81 aa).

2 consecutive transmembrane segments (helical) span residues Tyr-14 to Val-34 and Leu-60 to Val-80.

This sequence belongs to the ATPase C chain family. As to quaternary structure, F-type ATPases have 2 components, F(1) - the catalytic core - and F(0) - the membrane proton channel. F(1) has five subunits: alpha(3), beta(3), gamma(1), delta(1), epsilon(1). F(0) has three main subunits: a(1), b(2) and c(10-14). The alpha and beta chains form an alternating ring which encloses part of the gamma chain. F(1) is attached to F(0) by a central stalk formed by the gamma and epsilon chains, while a peripheral stalk is formed by the delta and b chains.

It is found in the cell membrane. In terms of biological role, f(1)F(0) ATP synthase produces ATP from ADP in the presence of a proton or sodium gradient. F-type ATPases consist of two structural domains, F(1) containing the extramembraneous catalytic core and F(0) containing the membrane proton channel, linked together by a central stalk and a peripheral stalk. During catalysis, ATP synthesis in the catalytic domain of F(1) is coupled via a rotary mechanism of the central stalk subunits to proton translocation. Functionally, key component of the F(0) channel; it plays a direct role in translocation across the membrane. A homomeric c-ring of between 10-14 subunits forms the central stalk rotor element with the F(1) delta and epsilon subunits. This is ATP synthase subunit c from Clostridium acetobutylicum (strain ATCC 824 / DSM 792 / JCM 1419 / IAM 19013 / LMG 5710 / NBRC 13948 / NRRL B-527 / VKM B-1787 / 2291 / W).